Reading from the N-terminus, the 429-residue chain is MESLPQPQNQSSPATTPAKILLGKYELGRRLGSGSFAKVHLARSIESDELVAVKIIEKKKTIESGMEPRIIREIDAMRRLRHHPNILKIHEVMATKSKIYLVMELASGGELFSKVLRRGRLPESTARRYFQQLASALRFSHQDGVAHRDVKPQNLLLDEQGNLKVSDFGLSALPEHLQNGLLHTACGTPAYTAPEVISRRGYDGAKADAWSCGVILFVLLVGDVPFDDSNIAAMYRKIHRRDYRFPSWISKQAKSIIYQMLDPNPVTRMSIETVMKTNWFKKSLETSEFHRNVFDSEVEMKSSVNSITAFDLISLSSGLDLSGLFEAKKKKERRFTAKVSGVEVEEKAKMIGEKLGYVVKKKMMKKEGEVKVVGLGRGRTVIVVEAVELTVDVVVVEVKVVEGEEDDSRWSDLITELEDIVLSWHNDIM.

The region spanning 25 to 280 (YELGRRLGSG…IETVMKTNWF (256 aa)) is the Protein kinase domain. ATP contacts are provided by residues 31 to 39 (LGSGSFAKV) and K54. Residue D149 is the Proton acceptor of the active site. The segment at 167–195 (DFGLSALPEHLQNGLLHTACGTPAYTAPE) is activation loop. Phosphoserine is present on S171. T184 is modified (phosphothreonine). One can recognise an NAF domain in the interval 302–326 (SSVNSITAFDLISLSSGLDLSGLFE). A PPI region spans residues 330–363 (KKERRFTAKVSGVEVEEKAKMIGEKLGYVVKKKM).

This sequence belongs to the protein kinase superfamily. CAMK Ser/Thr protein kinase family. SNF1 subfamily. As to quaternary structure, interacts with CBL1, CBL2 and CBL3. Mn(2+) serves as cofactor. Autophosphorylated. Strongly expressed in leaves, but barely expressed in roots, stems or flowers.

It catalyses the reaction L-seryl-[protein] + ATP = O-phospho-L-seryl-[protein] + ADP + H(+). It carries out the reaction L-threonyl-[protein] + ATP = O-phospho-L-threonyl-[protein] + ADP + H(+). CIPK serine-threonine protein kinases interact with CBL proteins. Binding of a CBL protein to the regulatory NAF domain of CIPK protein lead to the activation of the kinase in a calcium-dependent manner. Phosphorylates the rice sucrose synthase (SuSy) in vitro in an allosteric manner. Involved in cold response. This chain is CBL-interacting serine/threonine-protein kinase 7 (CIPK7), found in Arabidopsis thaliana (Mouse-ear cress).